Here is a 218-residue protein sequence, read N- to C-terminus: Probable nicotinate-nucleotide adenylyltransferase (218 aa).

Belongs to the NadD family.

It carries out the reaction nicotinate beta-D-ribonucleotide + ATP + H(+) = deamido-NAD(+) + diphosphate. Its pathway is cofactor biosynthesis; NAD(+) biosynthesis; deamido-NAD(+) from nicotinate D-ribonucleotide: step 1/1. Catalyzes the reversible adenylation of nicotinate mononucleotide (NaMN) to nicotinic acid adenine dinucleotide (NaAD). The polypeptide is Probable nicotinate-nucleotide adenylyltransferase (Helicobacter hepaticus (strain ATCC 51449 / 3B1)).